The sequence spans 244 residues: Sortase B (244 aa).

Residues 1 to 6 lie on the Cytoplasmic side of the membrane; that stretch reads MRMKRF. A helical transmembrane segment spans residues 7 to 24; it reads LTIVQILLVVIIIIFGYK. Residues 25–244 lie on the Extracellular side of the membrane; the sequence is IVQTYIEDKQ…VVVAKIIKVS (220 aa). The active-site Acyl-thioester intermediate is the C223.

It belongs to the bacterial sortase family. Class B subfamily.

It localises to the cell membrane. The enzyme catalyses The enzyme catalyzes a cell wall sorting reaction in which a surface protein with a sorting signal containing a NPXTN motif is cleaved between the Thr and Asn residue. The resulting threonine carboxyl end of the protein is covalently attached to a pentaglycine cross-bridge of peptidoglycan.. With respect to regulation, inhibited by MTSET (2-(Trimethylammonium)-ethyl-methanethiosulfonate) and E64 ([n- (l-3-trans-carboxyoxirane-2-carbonyl)-l-leucyl]-amido(4-guanido)butane). Inhibited by coptisine. Functionally, transpeptidase that anchors surface proteins to the cell wall. Recognizes and modifies its substrate by proteolytic cleavage of a C-terminal sorting signal. Following cleavage, a covalent intermediate is formed via a thioester bond between the sortase and its substrate, which is then transferred and covalently attached to the cell wall. This sortase recognizes an Asn-Pro-Gln-Thr-Asn (NPQTN) motif in IsdC, which is cleaved by the sortase between the threonine and aspargine residues; may only have 1 substrate in this bacterium. May be dedicated to the process of iron acquisition during bacterial infection. In Staphylococcus aureus (strain NCTC 8325 / PS 47), this protein is Sortase B.